The chain runs to 233 residues: 7-cyano-7-deazaguanine synthase (233 aa).

7–17 (LSGGLDSAVTS) contacts ATP. Positions 195, 206, 209, and 212 each coordinate Zn(2+).

Belongs to the QueC family. Zn(2+) serves as cofactor.

The enzyme catalyses 7-carboxy-7-deazaguanine + NH4(+) + ATP = 7-cyano-7-deazaguanine + ADP + phosphate + H2O + H(+). It participates in purine metabolism; 7-cyano-7-deazaguanine biosynthesis. Functionally, catalyzes the ATP-dependent conversion of 7-carboxy-7-deazaguanine (CDG) to 7-cyano-7-deazaguanine (preQ(0)). This Methanococcus maripaludis (strain DSM 14266 / JCM 13030 / NBRC 101832 / S2 / LL) protein is 7-cyano-7-deazaguanine synthase.